We begin with the raw amino-acid sequence, 498 residues long: Minor fimbrium subunit Mfa1 (498 aa).

Residues 1–19 (MKLNKMFLVGALLSLGFAS) form the signal peptide. A lipid anchor (N-palmitoyl cysteine) is attached at cysteine 20. The S-diacylglycerol cysteine moiety is linked to residue cysteine 20. The propeptide occupies 20-50 (CSKEGNGPAPDSSSTADTHMSVSMSLPQHNR). The interval 436–476 (SGNPFVPTDPDPNNPDTPDNPDTPDPEDPDTPNPEEPLPVQ) is disordered.

It belongs to the bacteroidetes fimbrillin superfamily. FimA/Mfa1 family. In terms of assembly, structural component of the fimbrial stalk. Minor fimbriae are composed of a structural subunit, most often Mfa1, and the accessory subunits Mfa3, Mfa4 and Mfa5. Mfa1 interacts with Mfa2; this anchors the fimbrium in the membrane. Fimbrium assembly occurs by linear, head-to-tail oligomerization of fimbrial subunits. This is mediated via insertion of a C-terminal beta-strand from one subunit into a groove in the N-terminal domain of the following subunit.

The protein resides in the fimbrium. The protein localises to the cell outer membrane. Functionally, structural subunit of the minor fimbriae. These filamentous pili are attached to the cell surface; they mediate biofilm formation, adhesion onto host cells and onto other bacteria that are part of the oral microbiome. They play an important role in invasion of periodontal tissues and are recognized as major virulence factors. Mfa1 orthologs from different strains have highly divergent sequences, and this correlates with pathogenicity. In Porphyromonas gingivalis (Bacteroides gingivalis), this protein is Minor fimbrium subunit Mfa1.